The primary structure comprises 403 residues: Argininosuccinate synthase (403 aa).

10 to 18 (AYSGGLDTS) provides a ligand contact to ATP. L-citrulline is bound at residue tyrosine 87. Glycine 117 provides a ligand contact to ATP. Threonine 119, asparagine 123, and aspartate 124 together coordinate L-aspartate. Asparagine 123 serves as a coordination point for L-citrulline. Arginine 127, serine 175, serine 184, glutamate 260, and tyrosine 272 together coordinate L-citrulline.

It belongs to the argininosuccinate synthase family. Type 1 subfamily. As to quaternary structure, homotetramer.

The protein localises to the cytoplasm. It catalyses the reaction L-citrulline + L-aspartate + ATP = 2-(N(omega)-L-arginino)succinate + AMP + diphosphate + H(+). It participates in amino-acid biosynthesis; L-arginine biosynthesis; L-arginine from L-ornithine and carbamoyl phosphate: step 2/3. This chain is Argininosuccinate synthase, found in Bacillus licheniformis (strain ATCC 14580 / DSM 13 / JCM 2505 / CCUG 7422 / NBRC 12200 / NCIMB 9375 / NCTC 10341 / NRRL NRS-1264 / Gibson 46).